The chain runs to 156 residues: SsrA-binding protein (156 aa).

This sequence belongs to the SmpB family.

It localises to the cytoplasm. Functionally, required for rescue of stalled ribosomes mediated by trans-translation. Binds to transfer-messenger RNA (tmRNA), required for stable association of tmRNA with ribosomes. tmRNA and SmpB together mimic tRNA shape, replacing the anticodon stem-loop with SmpB. tmRNA is encoded by the ssrA gene; the 2 termini fold to resemble tRNA(Ala) and it encodes a 'tag peptide', a short internal open reading frame. During trans-translation Ala-aminoacylated tmRNA acts like a tRNA, entering the A-site of stalled ribosomes, displacing the stalled mRNA. The ribosome then switches to translate the ORF on the tmRNA; the nascent peptide is terminated with the 'tag peptide' encoded by the tmRNA and targeted for degradation. The ribosome is freed to recommence translation, which seems to be the essential function of trans-translation. This Clostridium tetani (strain Massachusetts / E88) protein is SsrA-binding protein.